Consider the following 446-residue polypeptide: MDRQKEFVLRTLEERDIRFVRLWFTDVLGYLKSVAIAPAELEGAFEEGIGFDGSSIEGFARVFESDTVARPDPSTFQVLPWKTSDGNHYSARMFCDITMPDGSPSWADSRHVLRRQLAKASDLGFTCYVHPEIEFFLLKPGPNDGTPPEPADNGGYFDQAVHDAAPNFRRHAIEALEQMGISVEFSHHEGAPGQQEIDLRYADALSMADNVMTFRYLVKEVALADGVRASFMPKPFAEHPGSAMHTHMSLFEGDTNAFHSPDDPLQLSDVAKSFIAGILEHANEISAVTNQWVNSYKRLVHGGEAPTAASWGAANRSALVRVPMYTPHKVSSRRVEVRSPDSACNPYLTFAVLLAAGLRGVEKGYVLGPQAEDNVWSLTQEERRAMGYRELPTSLGNALESMENSELVAEALGEHVFDYFLRNKRSEWENYRSHVTPYELKNYLSL.

Residues 15–102 form the GS beta-grasp domain; it reads RDIRFVRLWF…MFCDITMPDG (88 aa). The GS catalytic domain occupies 109-446; that stretch reads SRHVLRRQLA…PYELKNYLSL (338 aa). Residues Glu-132 and Glu-134 each contribute to the Mg(2+) site. Residue Glu-184 participates in ATP binding. The Mg(2+) site is built by Glu-189 and Glu-196. Gly-241 contacts L-glutamate. His-245 lines the Mg(2+) pocket. Residues 247–249 and Ser-249 each bind ATP; that span reads HMS. L-glutamate-binding residues include Arg-298, Glu-304, and Arg-316. Residues Arg-316 and Arg-321 each coordinate ATP. Glu-336 is a Mg(2+) binding site. Residue Arg-338 coordinates L-glutamate. Lys-363 is covalently cross-linked (Isoglutamyl lysine isopeptide (Lys-Gln) (interchain with Q-Cter in protein Pup)).

This sequence belongs to the glutamine synthetase family. Oligomer of 12 subunits arranged in the form of two hexagons. In its feedback-inhibited form, interacts with TnrA in order to block its DNA-binding activity. Requires Mg(2+) as cofactor.

The protein resides in the cytoplasm. The catalysed reaction is L-glutamate + NH4(+) + ATP = L-glutamine + ADP + phosphate + H(+). Inhibited by glutamine. Glutamine synthetase (GS) is an unusual multitasking protein that functions as an enzyme, a transcription coregulator, and a chaperone in ammonium assimilation and in the regulation of genes involved in nitrogen metabolism. It catalyzes the ATP-dependent biosynthesis of glutamine from glutamate and ammonia. Feedback-inhibited GlnA also interacts with and regulates the activity of the transcriptional regulator TnrA. During nitrogen limitation, TnrA is in its DNA-binding active state and turns on the transcription of genes required for nitrogen assimilation. Under conditions of nitrogen excess, feedback-inhibited GlnA forms a stable complex with TnrA, which inhibits its DNA-binding activity. In contrast, feedback-inhibited GlnA acts as a chaperone to stabilize the DNA-binding activity of GlnR, which represses the transcription of nitrogen assimilation genes. The chain is Glutamine synthetase from Mycolicibacterium smegmatis (strain ATCC 700084 / mc(2)155) (Mycobacterium smegmatis).